The chain runs to 249 residues: Anti-H(O) lectin 2 (249 aa).

Residue asparagine 118 is glycosylated (N-linked (GlcNAc...) asparagine). Residues glutamate 130 and aspartate 132 each coordinate Mn(2+). Ca(2+) contacts are provided by aspartate 132, tyrosine 134, asparagine 140, and aspartate 145. Residues aspartate 145 and histidine 148 each coordinate Mn(2+). Asparagine 245 is a glycosylation site (N-linked (GlcNAc...) asparagine).

This sequence belongs to the leguminous lectin family.

Its function is as follows. Di-N-acetylchitobiose specific lectin. This is Anti-H(O) lectin 2 from Ulex europaeus (Furze).